The following is an 85-amino-acid chain: U4-theraphotoxin-Hhn1w (85 aa).

The first 22 residues, 1 to 22 (MKVTLIAILTCAAVLALHTTAA), serve as a signal peptide directing secretion. Positions 23 to 48 (EELEAESQLMEVGMPDTELAAVDEER) are excised as a propeptide. 3 disulfides stabilise this stretch: cysteine 52/cysteine 66, cysteine 56/cysteine 77, and cysteine 71/cysteine 82.

This sequence belongs to the neurotoxin 12 (Hwtx-2) family. 02 (Hwtx-2) subfamily. As to expression, expressed by the venom gland.

Its subcellular location is the secreted. Its function is as follows. Postsynaptic neurotoxin. The chain is U4-theraphotoxin-Hhn1w from Cyriopagopus hainanus (Chinese bird spider).